Here is a 208-residue protein sequence, read N- to C-terminus: Putative adhesin P1-like protein MPN_468 (208 aa).

Disordered regions lie at residues 29 to 49 (TNGS…VAPT) and 97 to 172 (DSKT…NLTP). Positions 100-132 (TQNNTTTNENHTKFASATGSGQQQGSTTTTSAG) are enriched in low complexity. Positions 145 to 158 (SGNSISVQEATSGD) are enriched in polar residues. The segment covering 159–172 (NLTNYTNLPPNLTP) has biased composition (low complexity).

This sequence belongs to the adhesin P1 family.

The sequence is that of Putative adhesin P1-like protein MPN_468 from Mycoplasma pneumoniae (strain ATCC 29342 / M129 / Subtype 1) (Mycoplasmoides pneumoniae).